The following is a 242-amino-acid chain: Carboxy-S-adenosyl-L-methionine synthase (242 aa).

S-adenosyl-L-methionine is bound by residues Tyr-39, 64–66 (GCS), 89–90 (DN), 117–118 (DI), Asn-132, and Arg-199.

The protein belongs to the class I-like SAM-binding methyltransferase superfamily. Cx-SAM synthase family. Homodimer.

It carries out the reaction prephenate + S-adenosyl-L-methionine = carboxy-S-adenosyl-L-methionine + 3-phenylpyruvate + H2O. In terms of biological role, catalyzes the conversion of S-adenosyl-L-methionine (SAM) to carboxy-S-adenosyl-L-methionine (Cx-SAM). In Psychromonas ingrahamii (strain DSM 17664 / CCUG 51855 / 37), this protein is Carboxy-S-adenosyl-L-methionine synthase.